Reading from the N-terminus, the 255-residue chain is Probable transcriptional regulatory protein PCC7424_2775 (255 aa).

Belongs to the TACO1 family.

Its subcellular location is the cytoplasm. The polypeptide is Probable transcriptional regulatory protein PCC7424_2775 (Gloeothece citriformis (strain PCC 7424) (Cyanothece sp. (strain PCC 7424))).